Consider the following 275-residue polypeptide: Release factor glutamine methyltransferase (275 aa).

S-adenosyl-L-methionine is bound by residues 114 to 118, Asp137, Trp165, and Asn180; that span reads GTGSG. Substrate is bound at residue 180-183; the sequence is NPPY.

It belongs to the protein N5-glutamine methyltransferase family. PrmC subfamily.

The enzyme catalyses L-glutaminyl-[peptide chain release factor] + S-adenosyl-L-methionine = N(5)-methyl-L-glutaminyl-[peptide chain release factor] + S-adenosyl-L-homocysteine + H(+). Functionally, methylates the class 1 translation termination release factors RF1/PrfA and RF2/PrfB on the glutamine residue of the universally conserved GGQ motif. The protein is Release factor glutamine methyltransferase of Xylella fastidiosa (strain 9a5c).